A 282-amino-acid polypeptide reads, in one-letter code: Peptidoglycan-recognition protein LD (282 aa).

Residues 1 to 29 (MDSSHIAVRVARRSPSPAAVSQSSYGSLG) are disordered. At 1–88 (MDSSHIAVRV…RRNPTLHEDC (88 aa)) the chain is on the cytoplasmic side. The helical transmembrane segment at 89-111 (FNWRSVGLLVMCASALALAAYLL) threads the bilayer. Residues 112 to 282 (WRQTQTPDFG…PHYASHQTSK (171 aa)) lie on the Extracellular side of the membrane. The cysteines at positions 162 and 166 are disulfide-linked. Asparagine 222 carries N-linked (GlcNAc...) asparagine glycosylation.

It belongs to the N-acetylmuramoyl-L-alanine amidase 2 family. In terms of tissue distribution, expressed in uninduced hemocytes and mbn-2 cells.

The protein localises to the cell membrane. Peptidoglycan-recognition protein probably involved in innate immunity by binding to peptidoglycans (PGN) of bacteria and activating the immune response. The polypeptide is Peptidoglycan-recognition protein LD (PGRP-LD) (Drosophila melanogaster (Fruit fly)).